Here is a 619-residue protein sequence, read N- to C-terminus: Adagio protein 3 (619 aa).

The PAS domain maps to 44-123; it reads VGMFYYPMTP…SEIRRCLEEG (80 aa). Cys91 carries the post-translational modification S-4a-FMN cysteine. The 42-residue stretch at 127–168 folds into the PAC domain; that stretch reads QGELLNFRKDGTPLVNRLRLAPIRDDDGTITHVIGIQVFSET. One can recognise an F-box domain in the interval 211–257; it reads ILQLSDEVLAHNILSRLTPRDVASIGSACRRLRQLTKNESVRKMVCQ. Kelch repeat units lie at residues 304–354, 357–404, 409–457, 462–513, and 523–571; these read SRCN…TSSP, RWGH…AGGT, RSWH…PTSW, RLGH…ECSA, and RLDH…NVPG.

Belongs to the ADAGIO family. In terms of assembly, interacts with ADO1 (via Kelch repeats), ADO2 (via Kelch repeats), SKP1A/ASK1, SKP1B/ASK2, ASK3, SKP1K/ASK11, ASK12, ASK13 and SKP1N/ASK14. Interacts (via Kelch repeats) with CDF1, CDF2 and CDF3. Interacts (via N-terminus) with CO and GI (via N-terminus) in a blue-light-dependent manner. FMN binds covalently to cysteine after exposure to blue light and is reversed in the dark. As to expression, highly expressed in stomata and leaves and to a lower extent in seeds, roots, rosettes, stems and siliques. Also present in sepals and anther filaments.

It localises to the nucleus. It is found in the cytoplasm. It participates in protein modification; protein ubiquitination. Its function is as follows. Component of an E3 ubiquitin ligase complex that plays a central role in blue light-dependent circadian cycles. Acts as a blue light photoreceptor, due to the presence of FMN, that mediates light-regulated protein degradation of critical clock components by targeting them to the proteasome complex. The SCF(ADO3) E3 ubiquitin ligase complex is involved in the regulation of circadian clock-dependent processes including transition to flowering time, hypocotyl elongation, cotyledons and leaf movement rhythms. Forms a complex with 'GIGANTEA' (GI) to regulate 'CONSTANS' (CO) expression. Promotes CO expression during the light period of long days by decreasing the stability of CDF1 and CDF2 and by interacting directly with the CO protein and stabilizing it. ADO3 function is mainly GI dependent. Does not act as a regulator of CDF1 transcription. The interactions of ADO1/ZTL and ADO2 with ADO3 prevent its interaction with CDF1. The protein is Adagio protein 3 (ADO3) of Arabidopsis thaliana (Mouse-ear cress).